Here is a 387-residue protein sequence, read N- to C-terminus: EARP and GARP complex-interacting protein 1 (387 aa).

At Met1 the chain carries N-acetylmethionine. 6 WD repeats span residues 4–48 (DAPV…IIDF), 55–101 (INKN…VWRM), 124–164 (ELLC…LWDL), 172–214 (VLAS…GWDT), 219–258 (QIYC…FWDT), and 263–302 (EPVK…LSNM). Residues 310–335 (FGHLVDDDDISDQEDHRSEEKSKEPL) are disordered. Ser320 is modified (phosphoserine). Basic and acidic residues predominate over residues 322–335 (QEDHRSEEKSKEPL). The WD 7 repeat unit spans residues 338 to 379 (NVIATYEEHEDSVYAVDWSSADPWLFASLSYDGRLVINRVPR).

Belongs to the WD repeat EIPR1 family. As to quaternary structure, interacts with two multisubunit tethering complexes: EARP composed of VPS50, VPS51, VPS52 and VPS53 subunits and GARP complex composed of VPS51, VPS52, VPS53 and VPS54 subunits. Interacts with SNAP29.

The protein resides in the golgi apparatus. It is found in the trans-Golgi network. Functionally, acts as a component of endosomal retrieval machinery that is involved in protein transport from early endosomes to either recycling endosomes or the trans-Golgi network. Mediates the recruitment of Golgi-associated retrograde protein (GARP) complex to the trans-Golgi network and controls early endosome-to-Golgi transport of internalized protein. Promotes the recycling of internalized transferrin receptor (TFRC) to the plasma membrane through interaction with endosome-associated recycling protein (EARP) complex. Controls proper insulin distribution and secretion, and retention of cargo in mature dense core vesicles. Required for the stability of the endosome-associated retrograde protein (EARP) complex subunits and for proper localization and association of EARP with membranes. The sequence is that of EARP and GARP complex-interacting protein 1 from Homo sapiens (Human).